The sequence spans 264 residues: S-adenosylmethionine decarboxylase proenzyme (264 aa).

Catalysis depends on serine 112, which acts as the Schiff-base intermediate with substrate; via pyruvic acid. Position 112 is a pyruvic acid (Ser); by autocatalysis (serine 112). Residue histidine 117 is the Proton acceptor; for processing activity of the active site. The Proton donor; for catalytic activity role is filled by cysteine 140.

This sequence belongs to the prokaryotic AdoMetDC family. Type 2 subfamily. Heterooctamer of four alpha and four beta chains arranged as a tetramer of alpha/beta heterodimers. The cofactor is pyruvate. Is synthesized initially as an inactive proenzyme. Formation of the active enzyme involves a self-maturation process in which the active site pyruvoyl group is generated from an internal serine residue via an autocatalytic post-translational modification. Two non-identical subunits are generated from the proenzyme in this reaction, and the pyruvate is formed at the N-terminus of the alpha chain, which is derived from the carboxyl end of the proenzyme. The post-translation cleavage follows an unusual pathway, termed non-hydrolytic serinolysis, in which the side chain hydroxyl group of the serine supplies its oxygen atom to form the C-terminus of the beta chain, while the remainder of the serine residue undergoes an oxidative deamination to produce ammonia and the pyruvoyl group blocking the N-terminus of the alpha chain.

It catalyses the reaction S-adenosyl-L-methionine + H(+) = S-adenosyl 3-(methylsulfanyl)propylamine + CO2. It functions in the pathway amine and polyamine biosynthesis; S-adenosylmethioninamine biosynthesis; S-adenosylmethioninamine from S-adenosyl-L-methionine: step 1/1. In terms of biological role, catalyzes the decarboxylation of S-adenosylmethionine to S-adenosylmethioninamine (dcAdoMet), the propylamine donor required for the synthesis of the polyamines spermine and spermidine from the diamine putrescine. This chain is S-adenosylmethionine decarboxylase proenzyme, found in Escherichia coli O45:K1 (strain S88 / ExPEC).